Consider the following 185-residue polypeptide: Transposon Tn3 resolvase (185 aa).

The Resolvase/invertase-type recombinase catalytic domain occupies 2 to 137 (RIFGYARVST…EGRQEAKLKG (136 aa)). S10 acts as the O-(5'-phospho-DNA)-serine intermediate in catalysis. Positions 161–180 (ATEIAHQLSIARSTVYKILE) form a DNA-binding region, H-T-H motif.

The protein belongs to the site-specific recombinase resolvase family.

In terms of biological role, resolvase catalyzes the resolution (a site-specific recombination) of the cointegrated replicon to yield the final transposition products. In Escherichia coli, this protein is Transposon Tn3 resolvase (tnpR).